A 156-amino-acid polypeptide reads, in one-letter code: Ribonuclease H (156 aa).

In terms of domain architecture, RNase H type-1 spans 1-142 (MGKQVEIFTD…CDELARAAAN (142 aa)). 4 residues coordinate Mg(2+): Asp10, Glu48, Asp70, and Asp134.

It belongs to the RNase H family. Monomer. Mg(2+) is required as a cofactor.

It is found in the cytoplasm. It catalyses the reaction Endonucleolytic cleavage to 5'-phosphomonoester.. Endonuclease that specifically degrades the RNA of RNA-DNA hybrids. The polypeptide is Ribonuclease H (Photorhabdus laumondii subsp. laumondii (strain DSM 15139 / CIP 105565 / TT01) (Photorhabdus luminescens subsp. laumondii)).